The chain runs to 238 residues: MTEPVSDQTALVLFSGGQDSATCLAWALSRFARVEMIGFDYGQRHAVELDCRAKLLDGFRAISSEWASKLGDSHTLAIPTLSAISDTALTRDVEIAMGADGLPNTFVPGRNLIFLTFAAALAYRRGIADIVGGMCETDYSGYPDCRDDTIKALQGAISLGMARDFELHTPLMWRDKAATWQLAHDLGGAALVDLIREHSHTCYLGERGERHDWGYGCGECPACALRARGWREYRTRTG.

14–24 contacts ATP; the sequence is FSGGQDSATCL. Zn(2+) is bound by residues Cys-202, Cys-217, Cys-220, and Cys-223.

It belongs to the QueC family. Zn(2+) is required as a cofactor.

It catalyses the reaction 7-carboxy-7-deazaguanine + NH4(+) + ATP = 7-cyano-7-deazaguanine + ADP + phosphate + H2O + H(+). The protein operates within purine metabolism; 7-cyano-7-deazaguanine biosynthesis. Catalyzes the ATP-dependent conversion of 7-carboxy-7-deazaguanine (CDG) to 7-cyano-7-deazaguanine (preQ(0)). This is 7-cyano-7-deazaguanine synthase 1 from Rhodopseudomonas palustris (strain HaA2).